Here is a 385-residue protein sequence, read N- to C-terminus: MALEAGDMEEGQLSDSDSDMTVVPSDRPLQMAKVLGGGGAACAPVSNYRTVKHVDSSEESLDSDDDCSLWKRKRQKCHSPPPKPEPFPFGQSGQKPALNGGKKVNNIWGAVLQEQNQDAVATELGILGMEGTIDRSRQSETYNYLLAKKLAKKESQEYTKELDKDLDEYMHGDKKPGSKEEENGQGHLKRKRPVRDRLGNRVEMNYKGRYDITEEDSPEKVADEIAFRLQEPKKDLIARVVTILGNKKAIELLMETAEVEQNGGLFIMNGSRRRTPGGVFLNLLKNTPSISEEQIKDIFYIENQKEYENKKAARKRRTQLLGKKMKEAIKSLNFQEDDDTSRETFASDTNEALASLDEAQEGPGETKLDAEDAIEVDHPQDLDIF.

Over residues 1 to 18 the composition is skewed to acidic residues; it reads MALEAGDMEEGQLSDSDS. Residues 1 to 26 form a disordered region; that stretch reads MALEAGDMEEGQLSDSDSDMTVVPSD. Ala2 is modified (N-acetylalanine). Residues 2 to 320 form a necessary for interaction with CBP80 region; sequence ALEAGDMEEG…KAARKRRTQL (319 aa). Residues Ser14, Ser16, Ser56, Ser57, Ser60, and Ser63 each carry the phosphoserine modification. Residues 71-74 carry the Nuclear localization signal motif; that stretch reads KRKR. The segment at 72–101 is disordered; sequence RKRQKCHSPPPKPEPFPFGQSGQKPALNGG. The Nuclear export signal motif lies at 120–129; the sequence is VATELGILGM. Basic and acidic residues predominate over residues 164–184; sequence KDLDEYMHGDKKPGSKEEENG. The interval 164–192 is disordered; that stretch reads KDLDEYMHGDKKPGSKEEENGQGHLKRKR. The Nuclear localization signal signature appears at 189–192; sequence KRKR. Residue Ser217 is modified to Phosphoserine. Positions 219–319 are sufficient for poly U RNA-binding; the sequence is EKVADEIAFR…KKAARKRRTQ (101 aa). Residues 270 to 278 form a necessary for poly U RNA-binding and snRNA export region; it reads GSRRRTPGG. Thr287 is subject to Phosphothreonine. Residues 334–385 are disordered; it reads FQEDDDTSRETFASDTNEALASLDEAQEGPGETKLDAEDAIEVDHPQDLDIF. The segment covering 343–352 has biased composition (polar residues); that stretch reads ETFASDTNEA. Ser347 carries the phosphoserine modification. Positions 364–385 are enriched in basic and acidic residues; it reads GETKLDAEDAIEVDHPQDLDIF.

The protein belongs to the PHAX family. In terms of assembly, found in a U snRNA export complex with PHAX/RNUXA, NCBP1/CBP80, NCBP2/CBP20, RAN, XPO1 and m7G-capped RNA. Part of a precomplex with PHAX/RNUXA, NCBP1/CBP80, NCBP2/CBP20 and m7G-capped RNA. Interacts with NCBP1/CBP80. Found in a complex with snoRNA. Interacts with NCBP2/CBP20. Interacts with DDX39A; this interaction stimulates PHAX RNA binding activity. Phosphorylated in the nucleus. Dephosphorylated in the cytoplasm. Expressed in dorsal root ganglia and sensory neuron cell bodies.

It is found in the nucleus. It localises to the nucleoplasm. The protein localises to the cajal body. Its subcellular location is the cytoplasm. A phosphoprotein adapter involved in the XPO1-mediated U snRNA export from the nucleus. Bridge components required for U snRNA export, the cap binding complex (CBC)-bound snRNA on the one hand and the GTPase Ran in its active GTP-bound form together with the export receptor XPO1 on the other. Its phosphorylation in the nucleus is required for U snRNA export complex assembly and export, while its dephosphorylation in the cytoplasm causes export complex disassembly. It is recycled back to the nucleus via the importin alpha/beta heterodimeric import receptor. The directionality of nuclear export is thought to be conferred by an asymmetric distribution of the GTP- and GDP-bound forms of Ran between the cytoplasm and nucleus. Its compartmentalized phosphorylation cycle may also contribute to the directionality of export. Binds strongly to m7G-capped U1 and U5 small nuclear RNAs (snRNAs) in a sequence-unspecific manner and phosphorylation-independent manner. Also plays a role in the biogenesis of U3 small nucleolar RNA (snoRNA). Involved in the U3 snoRNA transport from nucleoplasm to Cajal bodies. Binds strongly to m7G-capped U3, U8 and U13 precursor snoRNAs and weakly to trimethylated (TMG)-capped U3, U8 and U13 snoRNAs. Also binds to telomerase RNA. This chain is Phosphorylated adapter RNA export protein (Phax), found in Rattus norvegicus (Rat).